Reading from the N-terminus, the 582-residue chain is ATP-dependent lipid A-core flippase (582 aa).

5 helical membrane passes run 16–36, 63–83, 153–173, 253–273, and 275–295; these read LWPTIAPFKAGLIVAGVALIL, VLVWMPLVVIGLMILRGITSY, IIGLFIMMFYYSWQLSIILIV, PIIQLIASLALAFVLYAASFP, and VMDNLTAGTITVVFSSMIALM. Residues 28-310 form the ABC transmembrane type-1 domain; that stretch reads IVAGVALILN…LTNVNAQFQR (283 aa). The region spanning 342-578 is the ABC transporter domain; that stretch reads VEFRNVTFTY…RGVYAQLHKM (237 aa). 376–383 contacts ATP; the sequence is GRSGSGKS.

It belongs to the ABC transporter superfamily. Lipid exporter (TC 3.A.1.106) family. Homodimer.

The protein localises to the cell inner membrane. The catalysed reaction is ATP + H2O + lipid A-core oligosaccharideSide 1 = ADP + phosphate + lipid A-core oligosaccharideSide 2.. Its function is as follows. Involved in lipopolysaccharide (LPS) biosynthesis. Translocates lipid A-core from the inner to the outer leaflet of the inner membrane. Transmembrane domains (TMD) form a pore in the inner membrane and the ATP-binding domain (NBD) is responsible for energy generation. The protein is ATP-dependent lipid A-core flippase of Shigella sonnei (strain Ss046).